The following is a 118-amino-acid chain: Hydrogenase maturation factor HypA (118 aa).

His-2 contacts Ni(2+). 4 residues coordinate Zn(2+): Cys-73, Cys-76, Cys-90, and Cys-93.

It belongs to the HypA/HybF family.

In terms of biological role, involved in the maturation of [NiFe] hydrogenases. Required for nickel insertion into the metal center of the hydrogenase. The protein is Hydrogenase maturation factor HypA of Salmonella typhi.